The primary structure comprises 197 residues: Shikimate kinase (197 aa).

26-31 (GSGKSR) is an ATP binding site. Mg(2+) is bound at residue Ser-30. Residues Asp-48, Arg-72, and Gly-94 each coordinate substrate. Arg-132 is a binding site for ATP. Residue Arg-150 coordinates substrate.

It belongs to the shikimate kinase family. As to quaternary structure, monomer. Mg(2+) serves as cofactor.

It is found in the cytoplasm. It carries out the reaction shikimate + ATP = 3-phosphoshikimate + ADP + H(+). The protein operates within metabolic intermediate biosynthesis; chorismate biosynthesis; chorismate from D-erythrose 4-phosphate and phosphoenolpyruvate: step 5/7. Its function is as follows. Catalyzes the specific phosphorylation of the 3-hydroxyl group of shikimic acid using ATP as a cosubstrate. In Prochlorococcus marinus (strain MIT 9211), this protein is Shikimate kinase.